The sequence spans 1902 residues: Putative surface cell antigen sca1 (1902 aa).

An N-terminal signal peptide occupies residues 1-28; the sequence is MNKLTEQHLLKKSRFLKYSLLASISVGA. Disordered stretches follow at residues 140 to 273, 420 to 485, 707 to 729, 858 to 885, and 1470 to 1548; these read GIEK…TFVP, QGVF…SRTA, TTTT…YSSS, NRRR…AWGN, and KSES…SDGD. Polar residues-rich tracts occupy residues 146–159 and 168–197; these read QSQN…TEQM and TASS…SPEH. The span at 199-212 shows a compositional bias: low complexity; that stretch reads TTAPGTPSSTPATP. A compositionally biased stretch (polar residues) spans 225–238; the sequence is LGANTPPNINTNSK. The segment covering 246-264 has biased composition (low complexity); it reads SSSGPQQQAVQSSSQVKSE. A compositionally biased stretch (polar residues) spans 423 to 439; it reads FNKNKSSGGNARKSSAG. Basic and acidic residues predominate over residues 445–482; sequence KKQEAQKQLSEIKKQEKAIKTASDKAKEVAASAKKETS. Over residues 863–874 the composition is skewed to basic and acidic residues; sequence RDGETSKQRTVD. Low complexity predominate over residues 1491-1507; sequence LSSLPALASSNESALAL. Residues 1521-1538 are compositionally biased toward acidic residues; it reads SSEDEESYDSGFEEEEET. An Autotransporter domain is found at 1618–1902; the sequence is ESHIKRGLWM…QGSVKLKVNL (285 aa).

Its subcellular location is the cell outer membrane. This is Putative surface cell antigen sca1 (sca1) from Rickettsia conorii (strain ATCC VR-613 / Malish 7).